The sequence spans 330 residues: Calponin-3 (330 aa).

The residue at position 23 (K23) is an N6-acetyllysine. Residues 26 to 130 form the Calponin-homology (CH) domain; sequence QQAEEDLRNW…TLVALAGLAK (105 aa). At K158 the chain carries N6-methyllysine. Calponin-like repeat units follow at residues 164 to 189, 204 to 229, and 243 to 268; these read IGLQ…RHLY, ISLQ…RDIY, and ISLQ…RQVY. The tract at residues 279 to 330 is disordered; that stretch reads PVIHNGSQGTGTNGSEISDSDYQAEYPDEYHGEYPDDYPREYQYGDDQGIDY. The segment covering 306–318 has biased composition (basic and acidic residues); the sequence is DEYHGEYPDDYPR.

Belongs to the calponin family.

In terms of biological role, thin filament-associated protein that is implicated in the regulation and modulation of smooth muscle contraction. It is capable of binding to actin, calmodulin and tropomyosin. The interaction of calponin with actin inhibits the actomyosin Mg-ATPase activity. The polypeptide is Calponin-3 (Cnn3) (Mus musculus (Mouse)).